The following is a 495-amino-acid chain: Fibronectin type III and SPRY domain-containing protein 1 (495 aa).

Residues 4 to 99 are a coiled coil; the sequence is QKESLRKIIT…ALESSEELLE (96 aa). The COS domain occupies 105-162; the sequence is LCSSENDSFTQAAKDIKDSVTMAPAFRLSLKAKASDSMNHMMVDFTHERNLLQSITFL. The 105-residue stretch at 164-268 folds into the Fibronectin type-III domain; it reads VPATPEIHVA…EPVTLETHAF (105 aa). Positions 281 to 476 constitute a B30.2/SPRY domain; that stretch reads LKVEDLSVEW…VQTGLQVPSI (196 aa). Residues 306 to 332 are disordered; that stretch reads KNRTNSPMHSPARTAMMSPKRAPSARV. Ser-490 carries the post-translational modification Phosphoserine.

In terms of assembly, oligomerization is required for binding to microtubules.

The protein localises to the cytoplasm. It localises to the cytoskeleton. Its subcellular location is the microtubule organizing center. The protein resides in the centrosome. It is found in the nucleus. The protein localises to the cleavage furrow. May be involved in microtubule organization and stabilization. The polypeptide is Fibronectin type III and SPRY domain-containing protein 1 (fsd1) (Danio rerio (Zebrafish)).